The chain runs to 626 residues: UvrABC system protein C (626 aa).

The GIY-YIG domain occupies 20 to 97 (ECSGVYKMLD…IKKFQPKFNI (78 aa)). The region spanning 207 to 242 (RELQENLSKKMQELSSQMRFEEAAEIRDRIKALSYV) is the UVR domain.

This sequence belongs to the UvrC family. In terms of assembly, interacts with UvrB in an incision complex.

The protein resides in the cytoplasm. In terms of biological role, the UvrABC repair system catalyzes the recognition and processing of DNA lesions. UvrC both incises the 5' and 3' sides of the lesion. The N-terminal half is responsible for the 3' incision and the C-terminal half is responsible for the 5' incision. The sequence is that of UvrABC system protein C from Rickettsia typhi (strain ATCC VR-144 / Wilmington).